Consider the following 1121-residue polypeptide: Pleckstrin homology domain-containing family A member 7 (1121 aa).

WW domains lie at 9–42 (DTLPEHWSYGVCRDGRVFFINDQLRCTTWLHPRT) and 54–87 (SDLPRGWEEGFTEEGASYFIDHNQQTTAFRHPVT). A disordered region spans residues 105–137 (PHMSKQDRNQRPSSMVSETSTAGTASTLEAKPG). Positions 115–131 (RPSSMVSETSTAGTAST) are enriched in polar residues. The 119-residue stretch at 164-282 (PVVVRGWLHK…WVRAMNQAAQ (119 aa)) folds into the PH domain. Residues 299–514 (QAVPQANHTE…LKMSSEERRA (216 aa)) form a disordered region. 2 stretches are compositionally biased toward basic and acidic residues: residues 308–356 (ESCH…EGKR) and 437–446 (HWARAQKGDS). Over residues 460–475 (PGQSLSFPENYQTLPK) the composition is skewed to polar residues. Residues 497-514 (YAQDRASHLKMSSEERRA) are compositionally biased toward basic and acidic residues. Phosphoserine occurs at positions 536, 545, 569, 604, 608, and 612. An interaction with CTNND1 region spans residues 538–696 (TAPICLGSPE…AESDTDVKLS (159 aa)). The tract at residues 547-632 (EFTDQGRSRS…NSSHVDRRSM (86 aa)) is disordered. The segment covering 567–582 (PPSPSDIPPPGPPRVF) has biased composition (pro residues). Positions 589-605 (TPAERVTVKPPDQRRSV) are enriched in basic and acidic residues. A coiled-coil region spans residues 700–801 (EQDRVLQDLE…LQEQHRRAFF (102 aa)). Disordered stretches follow at residues 841–876 (RKTVPLFPHPPVPSLSTSESKPPPQPSPPTSPVRTP) and 888–971 (YVPY…ELGQ). Residues serine 858, serine 860, and serine 867 each carry the phosphoserine modification. Residues 861 to 871 (KPPPQPSPPTS) show a composition bias toward pro residues. Residue threonine 870 is modified to Phosphothreonine. 3 positions are modified to phosphoserine: serine 871, serine 903, and serine 907. Positions 933-942 (DQPPAVPPLP) are enriched in pro residues. The span at 958 to 969 (RQSDERKRDREL) shows a compositional bias: basic and acidic residues. The residue at position 986 (serine 986) is a Phosphoserine. Disordered stretches follow at residues 1003-1028 (GLVGPESRYQTLPGRGLSGSTSRLQQ) and 1082-1121 (RHQKALVRERKRTLGQGERTGLPSSRYLSRPLPGDLGSVC). Residues 1067–1094 (QRGKMSAEEQLERMKRHQKALVRERKRT) are a coiled coil. A compositionally biased stretch (basic residues) spans 1082-1094 (RHQKALVRERKRT).

Interacts with CAMSAP3 and CTNND1. Interacts (via WW domains) with TSPAN33 (via cytoplasmic domain) and with PDZD11; the interaction with TSPAN33 is dependent on PDZD11 being bound to PLEKHA7 and facilitates the docking of ADAM10 to zonula adherens through interaction of TSPAN33 with ADAM10.

The protein resides in the cell junction. It localises to the adherens junction. It is found in the cytoplasm. The protein localises to the cytoskeleton. Its subcellular location is the microtubule organizing center. The protein resides in the centrosome. Required for zonula adherens biogenesis and maintenance. Acts via its interaction with CAMSAP3, which anchors microtubules at their minus-ends to zonula adherens, leading to the recruitment of KIFC3 kinesin to the junctional site. Mediates docking of ADAM10 to zonula adherens through a PDZD11-dependent interaction with the ADAM10-binding protein TSPAN33. The chain is Pleckstrin homology domain-containing family A member 7 (PLEKHA7) from Homo sapiens (Human).